A 270-amino-acid polypeptide reads, in one-letter code: Short chain dehydrogenase/reductase dpfgG (270 aa).

Residues isoleucine 18, aspartate 69, asparagine 96, lysine 130, lysine 171, isoleucine 200, and asparagine 204 each coordinate NADP(+). Catalysis depends on lysine 171, which acts as the Lowers pKa of active site Tyr.

This sequence belongs to the short-chain dehydrogenases/reductases (SDR) family.

It participates in secondary metabolite biosynthesis; terpenoid biosynthesis. Short chain dehydrogenase/reductase; part of the gene cluster that mediates the biosynthesis of diterpenoid pyrones. The first step of the pathway is the synthesis of the alpha-pyrone moiety by the polyketide synthase dpfgA via condensation of one acetyl-CoA starter unit with 3 malonyl-CoA units and 2 methylations. The alpha-pyrone is then combined with geranylgeranyl pyrophosphate (GGPP) formed by the GGPP synthase dpfgD through the action of the prenyltransferase dpfgC to yield a linear alpha-pyrone diterpenoid. Subsequent steps in the diterpenoid pyrone biosynthetic pathway involve the decalin core formation, which is initiated by the epoxidation of the C10-C11 olefin by the FAD-dependent oxidoreductase dpfgE, and is followed by a cyclization cascade catalyzed by the terpene cyclase dpfgB. The short chain dehydrogenase/reductase dpfgG then oxidizes the 8S hydroxy group to a ketone and the short chain dehydrogenase/reductase dpfgH reduces the ketone to the 8R hydroxy group to yield higginsianin B. Higginsianin B is further methylated by the methyltransferase dpfgI to produce the intermediate named FDDP B. The cytochrome P450 monooxygenase dfgpJ then catalyzes a three-step oxidation at C-27 to generate a carboxylic acid as well as C-26 hydroxylation. Finally, methyltransferase dpfgK methylates the carboxylic acid generated by dpfgJ, yielding the final diterpenoid pyrones from the pathway which were named FDDP D and FDDP E. In Gibberella zeae (strain ATCC MYA-4620 / CBS 123657 / FGSC 9075 / NRRL 31084 / PH-1) (Wheat head blight fungus), this protein is Short chain dehydrogenase/reductase dpfgG.